The chain runs to 125 residues: MSEISAEERESGTVFAPKFDSDGLLTAVVQHVDTREVLMVAFMNADALDATRKTGIAHFFSRSRQTLWKKGGTSGNTLAVSQVLVDCDQDAVILLVEPAGPACHTGARTCFYRELDCGALQDVRT.

Asp-86 provides a ligand contact to Mg(2+). Position 87 (Cys-87) interacts with Zn(2+). 2 residues coordinate Mg(2+): Asp-88 and Asp-90. Residues Cys-103 and Cys-110 each contribute to the Zn(2+) site.

The protein belongs to the PRA-CH family. Homodimer. Mg(2+) serves as cofactor. The cofactor is Zn(2+).

It localises to the cytoplasm. It carries out the reaction 1-(5-phospho-beta-D-ribosyl)-5'-AMP + H2O = 1-(5-phospho-beta-D-ribosyl)-5-[(5-phospho-beta-D-ribosylamino)methylideneamino]imidazole-4-carboxamide. Its pathway is amino-acid biosynthesis; L-histidine biosynthesis; L-histidine from 5-phospho-alpha-D-ribose 1-diphosphate: step 3/9. Functionally, catalyzes the hydrolysis of the adenine ring of phosphoribosyl-AMP. This chain is Phosphoribosyl-AMP cyclohydrolase, found in Erythrobacter litoralis (strain HTCC2594).